The chain runs to 721 residues: Polyribonucleotide nucleotidyltransferase (721 aa).

2 residues coordinate Mg(2+): aspartate 486 and aspartate 492. Residues 553-612 (PKIVQLQIDIDKISLVIGSTGKTVKAITDEFEVKVQIEQNGKIILFGDDDFKMQKAKERI) enclose the KH domain. Residues 622-716 (GEIYEGIVKK…KFGKIDLEVV (95 aa)) enclose the S1 motif domain.

Belongs to the polyribonucleotide nucleotidyltransferase family. It depends on Mg(2+) as a cofactor.

The protein resides in the cytoplasm. It carries out the reaction RNA(n+1) + phosphate = RNA(n) + a ribonucleoside 5'-diphosphate. In terms of biological role, involved in mRNA degradation. Catalyzes the phosphorolysis of single-stranded polyribonucleotides processively in the 3'- to 5'-direction. This Borrelia garinii subsp. bavariensis (strain ATCC BAA-2496 / DSM 23469 / PBi) (Borreliella bavariensis) protein is Polyribonucleotide nucleotidyltransferase.